The primary structure comprises 194 residues: NADH-quinone oxidoreductase subunit B (194 aa).

Residues 1–11 are compositionally biased toward polar residues; the sequence is MGMSQNNSTLV. Positions 1 to 22 are disordered; it reads MGMSQNNSTLVAPQPKGIIDPA. C72, C73, C138, and C168 together coordinate [4Fe-4S] cluster.

This sequence belongs to the complex I 20 kDa subunit family. NDH-1 is composed of 14 different subunits. Subunits NuoB, C, D, E, F, and G constitute the peripheral sector of the complex. [4Fe-4S] cluster is required as a cofactor.

The protein localises to the cell inner membrane. It catalyses the reaction a quinone + NADH + 5 H(+)(in) = a quinol + NAD(+) + 4 H(+)(out). Functionally, NDH-1 shuttles electrons from NADH, via FMN and iron-sulfur (Fe-S) centers, to quinones in the respiratory chain. The immediate electron acceptor for the enzyme in this species is believed to be ubiquinone. Couples the redox reaction to proton translocation (for every two electrons transferred, four hydrogen ions are translocated across the cytoplasmic membrane), and thus conserves the redox energy in a proton gradient. In Agrobacterium fabrum (strain C58 / ATCC 33970) (Agrobacterium tumefaciens (strain C58)), this protein is NADH-quinone oxidoreductase subunit B.